Reading from the N-terminus, the 382-residue chain is Mannitol-1-phosphate 5-dehydrogenase (382 aa).

Position 3 to 14 (3 to 14 (ALHFGAGNIGRG)) interacts with NAD(+).

This sequence belongs to the mannitol dehydrogenase family.

The enzyme catalyses D-mannitol 1-phosphate + NAD(+) = beta-D-fructose 6-phosphate + NADH + H(+). This Salmonella dublin (strain CT_02021853) protein is Mannitol-1-phosphate 5-dehydrogenase.